Reading from the N-terminus, the 664-residue chain is Macoilin (664 aa).

4 consecutive transmembrane segments (helical) span residues 28–48, 75–95, 120–140, and 154–174; these read TFLY…DFVL, AFSV…LLFI, VCLP…AIRF, and FAAH…KSYV. Residues 252–265 are compositionally biased toward basic and acidic residues; it reads YREKGKEKDKDAKK. The disordered stretch occupies residues 252 to 274; that stretch reads YREKGKEKDKDAKKHNLGINNNN. Serine 305 carries the phosphoserine modification. Positions 320-348 are enriched in polar residues; the sequence is KNYKNASGVVNSSPRSHSATNGSIPSSSS. A disordered region spans residues 320–375; sequence KNYKNASGVVNSSPRSHSATNGSIPSSSSKNEKKQRCTSKGPSAHKDLMENCIPNN. N-linked (GlcNAc...) asparagine glycosylation is present at asparagine 324. At serine 332 the chain carries Phosphoserine. Residues asparagine 340 and asparagine 452 are each glycosylated (N-linked (GlcNAc...) asparagine). The tract at residues 630–664 is disordered; that stretch reads TSPLSPVSPHYSSKFVETSPSGLDPNASVYQPLKK. 2 positions are modified to phosphoserine: serine 631 and serine 634. Asparagine 655 is a glycosylation site (N-linked (GlcNAc...) asparagine).

Belongs to the macoilin family.

It localises to the rough endoplasmic reticulum membrane. Its subcellular location is the nucleus membrane. Its function is as follows. Plays a role in the regulation of neuronal activity. This Rattus norvegicus (Rat) protein is Macoilin.